We begin with the raw amino-acid sequence, 287 residues long: Cis-prenyltransferase 7, chloroplastic (287 aa).

The transit peptide at 1–34 (MLSLGFSLPPPSDNKLIITNNNQYNYRTNLANVC) directs the protein to the chloroplast. D61 is a catalytic residue.

Belongs to the UPP synthase family. Mg(2+) serves as cofactor. As to expression, expressed in leaf trichomes and stem trichomes.

The protein localises to the plastid. It localises to the chloroplast. In terms of biological role, uses geranylgeranyl diphosphate to catalyze the cis-prenyl chain elongation and produce polyprenyl diphosphate with a chain of 35 carbons. This is Cis-prenyltransferase 7, chloroplastic from Solanum lycopersicum (Tomato).